A 395-amino-acid polypeptide reads, in one-letter code: Chalcone synthase (395 aa).

Position 2 is an N-acetylvaline (valine 2). Cysteine 169 is a catalytic residue.

It belongs to the thiolase-like superfamily. Chalcone/stilbene synthases family.

It carries out the reaction (E)-4-coumaroyl-CoA + 3 malonyl-CoA + 3 H(+) = 2',4,4',6'-tetrahydroxychalcone + 3 CO2 + 4 CoA. It functions in the pathway secondary metabolite biosynthesis; flavonoid biosynthesis. The primary product of this enzyme is 4,2',4',6'-tetrahydroxychalcone (also termed naringenin-chalcone or chalcone) which can under specific conditions spontaneously isomerize into naringenin. This Cardamine amara (Large bitter-cress) protein is Chalcone synthase (CHS).